A 414-amino-acid chain; its full sequence is Protein ABHD18 (414 aa).

The signal sequence occupies residues 1 to 24 (MGVSKLDILYRRLLLTKLFIRGWG). N-linked (GlcNAc...) asparagine glycans are attached at residues asparagine 282 and asparagine 307.

This sequence belongs to the AB hydrolase superfamily.

It localises to the secreted. The sequence is that of Protein ABHD18 from Homo sapiens (Human).